A 259-amino-acid polypeptide reads, in one-letter code: Protein N-terminal and lysine N-methyltransferase efm7 (259 aa).

Residues W53, 80–82, D102, W138, and A164 contribute to the S-adenosyl-L-methionine site; that span reads GAA.

It belongs to the class I-like SAM-binding methyltransferase superfamily. EFM7 family.

Its subcellular location is the cytoplasm. In terms of biological role, S-adenosyl-L-methionine-dependent protein methyltransferase that trimethylates the N-terminal glycine 'Gly-2' of elongation factor 1-alpha, before also catalyzing the mono- and dimethylation of 'Lys-3'. This chain is Protein N-terminal and lysine N-methyltransferase efm7, found in Emericella nidulans (strain FGSC A4 / ATCC 38163 / CBS 112.46 / NRRL 194 / M139) (Aspergillus nidulans).